A 375-amino-acid polypeptide reads, in one-letter code: Queuine tRNA-ribosyltransferase (375 aa).

Residue D90 is the Proton acceptor of the active site. Substrate-binding positions include 90 to 94 (DSGGF), D144, Q193, and G220. Residues 251-257 (GVGTPED) form an RNA binding region. The active-site Nucleophile is D270. The RNA binding; important for wobble base 34 recognition stretch occupies residues 275 to 279 (TRNAR). Zn(2+) is bound by residues C308, C310, C313, and H339.

This sequence belongs to the queuine tRNA-ribosyltransferase family. In terms of assembly, homodimer. Within each dimer, one monomer is responsible for RNA recognition and catalysis, while the other monomer binds to the replacement base PreQ1. The cofactor is Zn(2+).

It carries out the reaction 7-aminomethyl-7-carbaguanine + guanosine(34) in tRNA = 7-aminomethyl-7-carbaguanosine(34) in tRNA + guanine. Its pathway is tRNA modification; tRNA-queuosine biosynthesis. In terms of biological role, catalyzes the base-exchange of a guanine (G) residue with the queuine precursor 7-aminomethyl-7-deazaguanine (PreQ1) at position 34 (anticodon wobble position) in tRNAs with GU(N) anticodons (tRNA-Asp, -Asn, -His and -Tyr). Catalysis occurs through a double-displacement mechanism. The nucleophile active site attacks the C1' of nucleotide 34 to detach the guanine base from the RNA, forming a covalent enzyme-RNA intermediate. The proton acceptor active site deprotonates the incoming PreQ1, allowing a nucleophilic attack on the C1' of the ribose to form the product. After dissociation, two additional enzymatic reactions on the tRNA convert PreQ1 to queuine (Q), resulting in the hypermodified nucleoside queuosine (7-(((4,5-cis-dihydroxy-2-cyclopenten-1-yl)amino)methyl)-7-deazaguanosine). The chain is Queuine tRNA-ribosyltransferase from Herminiimonas arsenicoxydans.